The sequence spans 285 residues: Dermonecrotic toxin LlSicTox-alphaIII1ii (285 aa).

His-12 is an active-site residue. 2 residues coordinate Mg(2+): Glu-32 and Asp-34. Catalysis depends on His-47, which acts as the Nucleophile. Cys-51 and Cys-57 are disulfide-bonded. Mg(2+) is bound at residue Asp-91.

Belongs to the arthropod phospholipase D family. Class I subfamily. It depends on Mg(2+) as a cofactor. Expressed by the venom gland.

It is found in the secreted. It catalyses the reaction an N-(acyl)-sphingosylphosphocholine = an N-(acyl)-sphingosyl-1,3-cyclic phosphate + choline. It carries out the reaction an N-(acyl)-sphingosylphosphoethanolamine = an N-(acyl)-sphingosyl-1,3-cyclic phosphate + ethanolamine. The catalysed reaction is a 1-acyl-sn-glycero-3-phosphocholine = a 1-acyl-sn-glycero-2,3-cyclic phosphate + choline. The enzyme catalyses a 1-acyl-sn-glycero-3-phosphoethanolamine = a 1-acyl-sn-glycero-2,3-cyclic phosphate + ethanolamine. In terms of biological role, dermonecrotic toxins cleave the phosphodiester linkage between the phosphate and headgroup of certain phospholipids (sphingolipid and lysolipid substrates), forming an alcohol (often choline) and a cyclic phosphate. This toxin acts on sphingomyelin (SM) with high activity (56.8 U/mg). It may also act on ceramide phosphoethanolamine (CPE), lysophosphatidylcholine (LPC) and lysophosphatidylethanolamine (LPE), but not on lysophosphatidylserine (LPS), and lysophosphatidylglycerol (LPG). It acts by transphosphatidylation, releasing exclusively cyclic phosphate products as second products. Induces dermonecrosis, hemolysis, increased vascular permeability, edema, inflammatory response, and platelet aggregation. Is lethal to mice. The protein is Dermonecrotic toxin LlSicTox-alphaIII1ii of Loxosceles laeta (South American recluse spider).